The sequence spans 263 residues: Isoprenyl transferase (263 aa).

Asp38 is a catalytic residue. Asp38 serves as a coordination point for Mg(2+). Substrate contacts are provided by residues Gly39–Arg42, His55, and Ser83–Asp85. Asn86 (proton acceptor) is an active-site residue. Residues Phe87, Arg89, Arg212, and Arg218 to Ser220 each bind substrate. Glu231 is a Mg(2+) binding site.

The protein belongs to the UPP synthase family. As to quaternary structure, homodimer. Mg(2+) is required as a cofactor.

Catalyzes the condensation of isopentenyl diphosphate (IPP) with allylic pyrophosphates generating different type of terpenoids. This chain is Isoprenyl transferase, found in Thermus thermophilus (strain ATCC BAA-163 / DSM 7039 / HB27).